Consider the following 142-residue polypeptide: Large ribosomal subunit protein bL21 (142 aa).

Over residues 74 to 84 (RRRQNSKRTRG) the composition is skewed to basic residues. Residues 74–142 (RRRQNSKRTR…KAAAKAESAE (69 aa)) form a disordered region. Positions 107 to 125 (KAAEKKAPKADAAEGEAAK) are enriched in basic and acidic residues. Residues 126 to 135 (PKKAAPKKAA) are compositionally biased toward basic residues.

The protein belongs to the bacterial ribosomal protein bL21 family. As to quaternary structure, part of the 50S ribosomal subunit. Contacts protein L20.

Its function is as follows. This protein binds to 23S rRNA in the presence of protein L20. This chain is Large ribosomal subunit protein bL21, found in Brucella melitensis biotype 2 (strain ATCC 23457).